We begin with the raw amino-acid sequence, 465 residues long: UDP-N-acetylmuramate--L-alanine ligase (465 aa).

115-121 is a binding site for ATP; it reads GAHGKTT.

Belongs to the MurCDEF family.

The protein localises to the cytoplasm. The catalysed reaction is UDP-N-acetyl-alpha-D-muramate + L-alanine + ATP = UDP-N-acetyl-alpha-D-muramoyl-L-alanine + ADP + phosphate + H(+). It participates in cell wall biogenesis; peptidoglycan biosynthesis. Functionally, cell wall formation. This chain is UDP-N-acetylmuramate--L-alanine ligase, found in Coxiella burnetii (strain CbuK_Q154) (Coxiella burnetii (strain Q154)).